Reading from the N-terminus, the 388-residue chain is Dual-specificity RNA methyltransferase RlmN (388 aa).

Glutamate 109 (proton acceptor) is an active-site residue. Residues 115–354 enclose the Radical SAM core domain; that stretch reads EDDRATLCVS…TIVRKTRGDD (240 aa). Cysteine 122 and cysteine 359 are oxidised to a cystine. [4Fe-4S] cluster contacts are provided by cysteine 129, cysteine 133, and cysteine 136. Residues 183–184, serine 215, 237–239, and asparagine 316 contribute to the S-adenosyl-L-methionine site; these read GE and SLH. Cysteine 359 acts as the S-methylcysteine intermediate in catalysis.

Belongs to the radical SAM superfamily. RlmN family. It depends on [4Fe-4S] cluster as a cofactor.

It localises to the cytoplasm. It catalyses the reaction adenosine(2503) in 23S rRNA + 2 reduced [2Fe-2S]-[ferredoxin] + 2 S-adenosyl-L-methionine = 2-methyladenosine(2503) in 23S rRNA + 5'-deoxyadenosine + L-methionine + 2 oxidized [2Fe-2S]-[ferredoxin] + S-adenosyl-L-homocysteine. The catalysed reaction is adenosine(37) in tRNA + 2 reduced [2Fe-2S]-[ferredoxin] + 2 S-adenosyl-L-methionine = 2-methyladenosine(37) in tRNA + 5'-deoxyadenosine + L-methionine + 2 oxidized [2Fe-2S]-[ferredoxin] + S-adenosyl-L-homocysteine. Specifically methylates position 2 of adenine 2503 in 23S rRNA and position 2 of adenine 37 in tRNAs. m2A2503 modification seems to play a crucial role in the proofreading step occurring at the peptidyl transferase center and thus would serve to optimize ribosomal fidelity. This chain is Dual-specificity RNA methyltransferase RlmN, found in Citrobacter koseri (strain ATCC BAA-895 / CDC 4225-83 / SGSC4696).